The primary structure comprises 137 residues: Large ribosomal subunit protein uL16 (137 aa).

The protein belongs to the universal ribosomal protein uL16 family. As to quaternary structure, part of the 50S ribosomal subunit.

Its function is as follows. Binds 23S rRNA and is also seen to make contacts with the A and possibly P site tRNAs. The sequence is that of Large ribosomal subunit protein uL16 from Endomicrobium trichonymphae.